A 351-amino-acid polypeptide reads, in one-letter code: Phosphoribosylformylglycinamidine cyclo-ligase (351 aa).

The protein belongs to the AIR synthase family.

The protein localises to the cytoplasm. It carries out the reaction 2-formamido-N(1)-(5-O-phospho-beta-D-ribosyl)acetamidine + ATP = 5-amino-1-(5-phospho-beta-D-ribosyl)imidazole + ADP + phosphate + H(+). Its pathway is purine metabolism; IMP biosynthesis via de novo pathway; 5-amino-1-(5-phospho-D-ribosyl)imidazole from N(2)-formyl-N(1)-(5-phospho-D-ribosyl)glycinamide: step 2/2. This Burkholderia pseudomallei (strain 668) protein is Phosphoribosylformylglycinamidine cyclo-ligase.